The chain runs to 402 residues: Type II NADH:quinone oxidoreductase (402 aa).

FAD-binding positions include 12–16 (GAGYA), 39–40 (NK), and Val83. Residue Glu172 is part of the active site. Residues Asp302, 319–320 (AQ), and Lys379 contribute to the FAD site.

This sequence belongs to the NADH dehydrogenase family. It depends on FAD as a cofactor.

Its subcellular location is the cell membrane. It catalyses the reaction a quinone + NADH + H(+) = a quinol + NAD(+). Its function is as follows. Alternative, nonproton pumping NADH:quinone oxidoreductase that delivers electrons to the respiratory chain by oxidation of NADH and reduction of quinones, and contributes to the regeneration of NAD(+). This is Type II NADH:quinone oxidoreductase from Staphylococcus epidermidis (strain ATCC 12228 / FDA PCI 1200).